Consider the following 1003-residue polypeptide: MPSKFSCRQLRETGQRFENFLVDRGQDRETDRERLRTIYNQDFKTSFGTPAPGFSSMLYGMKIANLAYVTKTRVRFFGLDRWADVWFPEKRRMKPGLEMSKHHRSLLATIFHDRAEYMHGKHGVNVEVQGPHEARDGQLLIRLDLNRKEVLTLRLRNGGTQPVTLTHLFPFCRTPQFSFCNGDRELPCLLGPGECYELHVHCKTSFVGYFPATVLWELLGPGEPGSEGAGTFYIARFLAAVAHSPLAAQLKPTTPFKRTQVSRNPVVTRRIEEGERPDRAKNYDLEFSLPLGTYYPPPRLRQLLPVLLRGTSIFTAPKEIAEIKAQLQTTLKWRNYEVKLRLLLHLEELQMEHDIRHYDLESVPMTWDPIDRNPRLLTLEVPGVAESRPSVLRGDHLFALLSSETHHEDPVTYKGFVHKVELDRVKLSFSTSLLSRFVDGLTFKVNFTFNRQPLRVQHRALELTGRWPLEPMLFPVASRGVPLLPSDVKLKLYDRSLESNPEQLQAMKHIVMGTTRPAPYIIFGPPGTGKTVTLVEAIKQVVKHLPKAHILACAPSNSGADLLCQRLRVHLPSSIYRLLAPSRDIHLVPEDIKPCCNWDAKKGDFVFPSKKKLQEYRVLITTLITASRLVSAQFPIDHFTHIFIDEAGHAMEPESLVAIAGLMEVKEADNPGGQLVLAGDPRQLGPVLRCPLTQKHGLGYSLLERLLTFNALYKKGPDGYNPQFITKLLRNYRSHPTILDVPNRLYYDGELQACADVVDRERFCRWEGLPRQDFPIIFHGVMGKDEREGNSPSFFNPEEAATVTSYLKQLLAPSSKKGKARLSPRSVGVISPYRKQVEKIRYCITKLDKQLRGLDDIKDLKVGSVEEFQGQERSVILISTVRSSQSFVQLDLDFNLGFLKNPKRFNVAVTRAKALLIVVGNPLLLGHDPDWKVFLEFCKENGGYTGCPFPAKLDLQQGQNLLQGLSKLSPSTSGLKSHDYLPQEREGEEGLSLQVEPEWRNEL.

Position 148 is an N6-acetyllysine (K148). Phosphothreonine is present on residues T160 and T254. S432 bears the Phosphoserine mark. Position 524-531 (524-531 (GPPGTGKT)) interacts with ATP. Positions 645–648 (DEAG) match the DEAG box motif. Positions 921 to 965 (NPLLLGHDPDWKVFLEFCKENGGYTGCPFPAKLDLQQGQNLLQGL) are interaction with AGO2 and APOBEC3G. Positions 968-1003 (LSPSTSGLKSHDYLPQEREGEEGLSLQVEPEWRNEL) are disordered. Phosphoserine occurs at positions 969 and 977. Basic and acidic residues predominate over residues 976-985 (KSHDYLPQER).

This sequence belongs to the DNA2/NAM7 helicase family. SDE3 subfamily. As to quaternary structure, interacts with DICER1, AGO2, TARBP2, EIF6 and RPL7A (60S ribosome subunit); they form a large RNA-induced silencing complex (RISC). Interacts with APOBEC3G in an RNA-dependent manner. Interacts with TRIM71 (via NHL repeats) in an RNA-dependent manner. Interacts with both protein products of LIRE1, ORF1p and ORF2p. Interacts with TUT4 and, to a lesser extent, TUT7; the interactions are RNA-dependent. Interacts with AGO2, TNRC6B and UPF1; the interactions are direct and RNA-dependent. Interacts with FMR1; this interaction is direct, occurs in an RNA-dependent manner on polysomes and induces association of MOV10 with RNAs. Interacts with SHFL; the interaction increases in presence of RNA. Interacts with DHX34; the interaction is-RNA independent. Interacts with RBM46. Post-translationally, ubiquitinated by the DCX(DCAF12) complex that specifically recognizes the glutamate-leucine (Glu-Leu) degron at the C-terminus, leading to its degradation.

It localises to the cytoplasm. The protein resides in the P-body. It is found in the cytoplasmic ribonucleoprotein granule. Its subcellular location is the stress granule. The protein localises to the nucleus. It carries out the reaction ATP + H2O = ADP + phosphate + H(+). Functionally, 5' to 3' RNA helicase that is involved in a number of cellular roles ranging from mRNA metabolism and translation, modulation of viral infectivity, inhibition of retrotransposition, or regulation of synaptic transmission. Plays an important role in innate antiviral immunity by promoting type I interferon production. Mechanistically, specifically uses IKKepsilon/IKBKE as the mediator kinase for IRF3 activation. Contributes to UPF1 mRNA target degradation by translocation along 3' UTRs. Required for microRNA (miRNA)-mediated gene silencing by the RNA-induced silencing complex (RISC). Required for both miRNA-mediated translational repression and miRNA-mediated cleavage of complementary mRNAs by RISC. In cooperation with FMR1, regulates miRNA-mediated translational repression by AGO2. Restricts retrotransposition of long interspersed element-1 (LINE-1) in cooperation with TUT4 and TUT7 counteracting the RNA chaperonne activity of L1RE1. Facilitates LINE-1 uridylation by TUT4 and TUT7. Required for embryonic viability and for normal central nervous system development and function. Plays two critical roles in early brain development: suppresses retroelements in the nucleus by directly inhibiting cDNA synthesis, while regulates cytoskeletal mRNAs to influence neurite outgrowth in the cytosol. May function as a messenger ribonucleoprotein (mRNP) clearance factor. In Bos taurus (Bovine), this protein is Putative helicase MOV-10 (MOV10).